Consider the following 247-residue polypeptide: Putative methyltransferase GWCH70_2453 (247 aa).

The protein belongs to the methyltransferase superfamily.

Its function is as follows. May be a S-adenosyl-L-methionine (SAM)-dependent methyltransferase. The protein is Putative methyltransferase GWCH70_2453 of Geobacillus sp. (strain WCH70).